The following is a 177-amino-acid chain: ATP synthase subunit delta (177 aa).

The protein belongs to the ATPase delta chain family. In terms of assembly, F-type ATPases have 2 components, F(1) - the catalytic core - and F(0) - the membrane proton channel. F(1) has five subunits: alpha(3), beta(3), gamma(1), delta(1), epsilon(1). F(0) has three main subunits: a(1), b(2) and c(10-14). The alpha and beta chains form an alternating ring which encloses part of the gamma chain. F(1) is attached to F(0) by a central stalk formed by the gamma and epsilon chains, while a peripheral stalk is formed by the delta and b chains.

Its subcellular location is the cell inner membrane. Functionally, f(1)F(0) ATP synthase produces ATP from ADP in the presence of a proton or sodium gradient. F-type ATPases consist of two structural domains, F(1) containing the extramembraneous catalytic core and F(0) containing the membrane proton channel, linked together by a central stalk and a peripheral stalk. During catalysis, ATP synthesis in the catalytic domain of F(1) is coupled via a rotary mechanism of the central stalk subunits to proton translocation. In terms of biological role, this protein is part of the stalk that links CF(0) to CF(1). It either transmits conformational changes from CF(0) to CF(1) or is implicated in proton conduction. The protein is ATP synthase subunit delta of Haemophilus ducreyi (strain 35000HP / ATCC 700724).